The primary structure comprises 398 residues: Signal-regulatory protein beta-1 (398 aa).

An N-terminal signal peptide occupies residues 1–29; that stretch reads MPVPASWPHLPSPFLLMTLLLGRLTGVAG. The Ig-like V-type domain maps to 30 to 136; sequence EDELQVIQPE…SPDDVEFKSG (107 aa). Over 30 to 371 the chain is Extracellular; that stretch reads EDELQVIQPE…EAALAPTAPL (342 aa). 2 cysteine pairs are disulfide-bonded: cysteine 54-cysteine 120 and cysteine 169-cysteine 227. 2 Ig-like C1-type domains span residues 147–246 and 253–347; these read PSAP…ANLS and PTLE…YALE. 3 N-linked (GlcNAc...) asparagine glycosylation sites follow: asparagine 244, asparagine 269, and asparagine 291. The helical transmembrane segment at 372 to 392 threads the bilayer; the sequence is LVALLLGPKLLLVVGVSAIYI. Residues 393–398 are Cytoplasmic-facing; that stretch reads CWKQKA.

In terms of assembly, homodimer; disulfide-linked. Interacts with TYROBP. This interaction results in the recruitment of SYK. In terms of processing, N-glycosylated. Detected in monocytes and dendritic cells.

The protein resides in the cell membrane. Functionally, immunoglobulin-like cell surface receptor involved in the negative regulation of receptor tyrosine kinase-coupled signaling processes. Also participates in the recruitment of tyrosine kinase SYK. Triggers activation of myeloid cells when associated with TYROBP. In Homo sapiens (Human), this protein is Signal-regulatory protein beta-1 (SIRPB1).